Consider the following 123-residue polypeptide: Small ribosomal subunit protein uS12 (123 aa).

D89 bears the 3-methylthioaspartic acid mark.

Belongs to the universal ribosomal protein uS12 family. Part of the 30S ribosomal subunit. Contacts proteins S8 and S17. May interact with IF1 in the 30S initiation complex.

Its function is as follows. With S4 and S5 plays an important role in translational accuracy. Interacts with and stabilizes bases of the 16S rRNA that are involved in tRNA selection in the A site and with the mRNA backbone. Located at the interface of the 30S and 50S subunits, it traverses the body of the 30S subunit contacting proteins on the other side and probably holding the rRNA structure together. The combined cluster of proteins S8, S12 and S17 appears to hold together the shoulder and platform of the 30S subunit. This Bartonella tribocorum (strain CIP 105476 / IBS 506) protein is Small ribosomal subunit protein uS12.